Here is a 348-residue protein sequence, read N- to C-terminus: Rhodopsin (348 aa).

Met1 carries the N-acetylmethionine modification. Topologically, residues 1–36 are extracellular; the sequence is MNGTEGPNFYVPFSNKTGVVRSPFEFPQYYLAEPWQ. 2 N-linked (GlcNAc...) asparagine glycosylation sites follow: Asn2 and Asn15. Residues 37-61 traverse the membrane as a helical segment; that stretch reads FSMLAAYMFLLIVLGFPINFLTLYV. Topologically, residues 62-73 are cytoplasmic; that stretch reads TVQHKKLRTPLN. Residues 74-96 form a helical membrane-spanning segment; the sequence is YILLNLAVADLFMVFGGFTTTLY. The Extracellular segment spans residues 97–110; sequence TSLHGYFVFGPTGC. Cys110 and Cys187 are joined by a disulfide. Residues 111–133 form a helical membrane-spanning segment; that stretch reads NLEGFFATLGGEIALWSLVVLAI. The 'Ionic lock' involved in activated form stabilization motif lies at 134-136; that stretch reads ERY. At 134-152 the chain is on the cytoplasmic side; sequence ERYVVVCKPMSNFRFGENH. Residues 153–173 form a helical membrane-spanning segment; sequence AIMGVGFTWVMALACAAPPLV. The Extracellular portion of the chain corresponds to 174–202; it reads GWSRYIPEGMQCSCGIDYYTLKPEVNNES. Residue Glu201 participates in Zn(2+) binding. The chain crosses the membrane as a helical span at residues 203-224; that stretch reads FVIYMFVVHFTIPMIVIFFCYG. Residues 225–252 are Cytoplasmic-facing; that stretch reads QLVFTVKEAAAQQQESATTQKAEKEVTR. The chain crosses the membrane as a helical span at residues 253–274; the sequence is MVIIMVIAFLICWVPYASVAFY. Residues 275 to 286 lie on the Extracellular side of the membrane; that stretch reads IFTHQGSNFGPI. Gln279 provides a ligand contact to Zn(2+). Residues 287 to 308 traverse the membrane as a helical segment; sequence FMTLPAFFAKAASIYNPVIYIM. The residue at position 296 (Lys296) is an N6-(retinylidene)lysine. The Cytoplasmic portion of the chain corresponds to 309-348; it reads MNKQFRTCMITTLCCGKNPLGDDEVSASASKTETSQVAPA. S-palmitoyl cysteine attachment occurs at residues Cys322 and Cys323. The segment at 330–348 is interaction with SAG; it reads DDEVSASASKTETSQVAPA. 2 positions are modified to phosphoserine: Ser334 and Ser338. Phosphothreonine is present on residues Thr340 and Thr342. The residue at position 343 (Ser343) is a Phosphoserine.

Belongs to the G-protein coupled receptor 1 family. Opsin subfamily. As to quaternary structure, homodimer. May form a complex composed of RHO, GRK1 and RCVRN in a Ca(2+)-dependent manner; RCVRN prevents the interaction between GRK1 and RHO. Interacts with GRK1. Interacts (phosphorylated form) with SAG. Interacts with GNAT1. Interacts with GNAT3. SAG and G-proteins compete for a common binding site. Interacts with PRCD; the interaction promotes PRCD stability. Forms a complex with ASAP1 and ARF4. Forms a complex with ASAP1, RAB11A, Rabin8/RAB3IP, ARF4 and RAB11FIP3; the complex regulates Golgi-to-cilia rhodopsin/RHO transport in photoreceptors. In terms of processing, phosphorylated on some or all of the serine and threonine residues present in the C-terminal region. Post-translationally, contains one covalently linked retinal chromophore. Upon light absorption, the covalently bound 11-cis-retinal is converted to all-trans-retinal. After hydrolysis of the Schiff base and release of the covalently bound all-trans-retinal, active rhodopsin is regenerated by binding of a fresh molecule of 11-cis-retinal.

The protein resides in the membrane. Its subcellular location is the cell projection. It is found in the cilium. The protein localises to the photoreceptor outer segment. Its function is as follows. Photoreceptor required for image-forming vision at low light intensity. Required for photoreceptor cell viability after birth. Light-induced isomerization of 11-cis to all-trans retinal triggers a conformational change that activates signaling via G-proteins. Subsequent receptor phosphorylation mediates displacement of the bound G-protein alpha subunit by the arrestin SAG and terminates signaling. This is Rhodopsin (RHO) from Phoca vitulina (Harbor seal).